The primary structure comprises 131 residues: uncharacterized protein (131 aa).

A disordered region spans residues 101 to 131 (SWWPPSGVVRGGPSSWPPSGVAEPREALGLP).

This is an uncharacterized protein from Homo sapiens (Human).